A 645-amino-acid chain; its full sequence is Acetyl-coenzyme A synthetase 2 (645 aa).

Residues 190 to 193, Thr-308, and Asn-332 contribute to the CoA site; that span reads RGGK. ATP contacts are provided by residues 384–386, 408–413, Asp-497, and Arg-512; these read GEP and DTWWQT. Ser-520 serves as a coordination point for CoA. Arg-523 provides a ligand contact to ATP. Positions 534, 536, and 539 each coordinate Mg(2+). Lys-606 is subject to N6-acetyllysine.

This sequence belongs to the ATP-dependent AMP-binding enzyme family. Requires Mg(2+) as cofactor. In terms of processing, acetylated. Deacetylation by the SIR2-homolog deacetylase activates the enzyme.

The catalysed reaction is acetate + ATP + CoA = acetyl-CoA + AMP + diphosphate. In terms of biological role, catalyzes the conversion of acetate into acetyl-CoA (AcCoA), an essential intermediate at the junction of anabolic and catabolic pathways. AcsA undergoes a two-step reaction. In the first half reaction, AcsA combines acetate with ATP to form acetyl-adenylate (AcAMP) intermediate. In the second half reaction, it can then transfer the acetyl group from AcAMP to the sulfhydryl group of CoA, forming the product AcCoA. The chain is Acetyl-coenzyme A synthetase 2 from Pseudomonas aeruginosa (strain ATCC 15692 / DSM 22644 / CIP 104116 / JCM 14847 / LMG 12228 / 1C / PRS 101 / PAO1).